Consider the following 245-residue polypeptide: Derlin-1 (245 aa).

Over Met1–Trp17 the chain is Cytoplasmic. The helical transmembrane segment at Leu18 to Leu38 threads the bilayer. The Lumenal portion of the chain corresponds to His39–Leu58. Residues Phe59–Val79 form a helical membrane-spanning segment. Over Gln80 to Tyr99 the chain is Cytoplasmic. Residues Leu100–Leu120 traverse the membrane as a helical segment. Over Met121 to Trp156 the chain is Lumenal. The helical transmembrane segment at Val157 to Val177 threads the bilayer. Topologically, residues Gly178 to Asn245 are cytoplasmic. The interval Phe218 to Asn245 is disordered.

This sequence belongs to the derlin family.

The protein localises to the endoplasmic reticulum membrane. May be involved in the degradation process of specific misfolded endoplasmic reticulum (ER) luminal proteins. May also involved in endoplasmic reticulum stress-induced pre-emptive quality control, a mechanism that selectively attenuates the translocation of newly synthesized proteins into the endoplasmic reticulum and reroutes them to the cytosol for proteasomal degradation. This is Derlin-1 from Drosophila melanogaster (Fruit fly).